The following is a 426-amino-acid chain: LIM/homeobox protein Lhx2 (426 aa).

Residues 14 to 24 (VIDEMDRRQER) show a composition bias toward basic and acidic residues. The tract at residues 14–42 (VIDEMDRRQERGSGISSAIDRGDTETTMP) is disordered. 2 consecutive LIM zinc-binding domains span residues 52 to 104 (CAGC…CKED) and 114 to 167 (CARC…CRLH). The disordered stretch occupies residues 248–268 (DAEHLDRDQPYPSSQKTKRMR). A DNA-binding region (homeobox) is located at residues 264 to 323 (TKRMRTSFKHHQLRTMKSYFAINHNPDAKDLKQLAQKTGLTKRVLQVWFQNARAKFRRNL). Residues 305-321 (KRVLQVWFQNARAKFRR) carry the Nuclear localization signal motif. A compositionally biased stretch (polar residues) spans 326–354 (QENTGVDKTSDATLQTGTPSGPASELSNA). The disordered stretch occupies residues 326–370 (QENTGVDKTSDATLQTGTPSGPASELSNASLSPSSTPTTLTDLTS). Residues 355–370 (SLSPSSTPTTLTDLTS) show a composition bias toward low complexity.

As to quaternary structure, interacts (via LIM domains) with CITED2. Interacts with POU4F2. Found in discrete regions of the developing CNS, primarily in diencephalic and telencephalic structures and a subset of lymphoid tissues. Also found in embryonic spinal cord and fetal liver.

Its subcellular location is the nucleus. Acts as a transcriptional activator. Stimulates the promoter of the alpha-glycoprotein gene. Transcriptional regulatory protein involved in the control of cell differentiation in developing lymphoid and neural cell types. The chain is LIM/homeobox protein Lhx2 (Lhx2) from Rattus norvegicus (Rat).